The primary structure comprises 460 residues: Cysteine--tRNA ligase (460 aa).

A Zn(2+)-binding site is contributed by C27. The 'HIGH' region motif lies at 29–39 (PTVYDLIHVGN). Zn(2+)-binding residues include C207, H232, and E236. Residues 264–268 (KMSKS) carry the 'KMSKS' region motif. K267 is an ATP binding site.

Belongs to the class-I aminoacyl-tRNA synthetase family. In terms of assembly, monomer. Zn(2+) is required as a cofactor.

The protein resides in the cytoplasm. The enzyme catalyses tRNA(Cys) + L-cysteine + ATP = L-cysteinyl-tRNA(Cys) + AMP + diphosphate. In Thermotoga petrophila (strain ATCC BAA-488 / DSM 13995 / JCM 10881 / RKU-1), this protein is Cysteine--tRNA ligase.